Here is a 390-residue protein sequence, read N- to C-terminus: Nucleotide-sugar uncharacterized transporter 1 (390 aa).

10 helical membrane passes run 61 to 81 (ICGPTVALTFNFVVAISIIFM), 89 to 109 (IGFEFPVFLTFIHYIVAYLLM), 128 to 148 (SLLPLYTLGIVMSLSTGLANV), 155 to 175 (VGFYQMAKIAVTPSIVFAEFL), 182 to 201 (SFMKVVSLTVVSVGVAVATV), 206 to 228 (FSLFGACVAFAWIIPSATNKILW), 249 to 269 (ITLLFLVSMIPFLDPPGALSF), 278 to 298 (AILVSALLGFFLQWSGALALG), 306 to 326 (VVLGQFKTCVLLLGNYYIFGS), and 329 to 349 (GFISVGGAFVAIMGTSLYTYL). Residues 356-365 (LKTSSSSSAL) show a composition bias toward low complexity. The segment at 356–390 (LKTSSSSSALSEKKSRFSDLKDDDKNLEPYGSEAV) is disordered. A compositionally biased stretch (basic and acidic residues) spans 366–382 (SEKKSRFSDLKDDDKNL).

It belongs to the TPT transporter family. TPT (TC 2.A.7.9) subfamily.

It localises to the membrane. The chain is Nucleotide-sugar uncharacterized transporter 1 from Arabidopsis thaliana (Mouse-ear cress).